We begin with the raw amino-acid sequence, 344 residues long: Arginine N-succinyltransferase (344 aa).

Residue Leu125 coordinates succinyl-CoA. His229 serves as the catalytic Proton donor.

The protein belongs to the arginine N-succinyltransferase family.

It carries out the reaction succinyl-CoA + L-arginine = N(2)-succinyl-L-arginine + CoA + H(+). Its pathway is amino-acid degradation; L-arginine degradation via AST pathway; L-glutamate and succinate from L-arginine: step 1/5. In terms of biological role, catalyzes the transfer of succinyl-CoA to arginine to produce N(2)-succinylarginine. In Citrobacter koseri (strain ATCC BAA-895 / CDC 4225-83 / SGSC4696), this protein is Arginine N-succinyltransferase.